The chain runs to 132 residues: L-ectoine synthase (132 aa).

The protein belongs to the ectoine synthase family.

The enzyme catalyses (2S)-4-acetamido-2-aminobutanoate = L-ectoine + H2O. It functions in the pathway amine and polyamine biosynthesis; ectoine biosynthesis; L-ectoine from L-aspartate 4-semialdehyde: step 3/3. Its function is as follows. Catalyzes the circularization of gamma-N-acetyl-alpha,gamma-diaminobutyric acid (ADABA) to ectoine (1,4,5,6-tetrahydro-2-methyl-4-pyrimidine carboxylic acid), which is an excellent osmoprotectant. This chain is L-ectoine synthase (ectC), found in Streptomyces anulatus (Streptomyces chrysomallus).